The chain runs to 275 residues: Trans-aconitate 2-methyltransferase (275 aa).

Belongs to the methyltransferase superfamily. Tam family.

The protein resides in the cytoplasm. The catalysed reaction is trans-aconitate + S-adenosyl-L-methionine = (E)-3-(methoxycarbonyl)pent-2-enedioate + S-adenosyl-L-homocysteine. In terms of biological role, catalyzes the S-adenosylmethionine monomethyl esterification of trans-aconitate. The protein is Trans-aconitate 2-methyltransferase of Pseudomonas paraeruginosa (strain DSM 24068 / PA7) (Pseudomonas aeruginosa (strain PA7)).